The primary structure comprises 72 residues: NAD(P)H-quinone oxidoreductase subunit O (72 aa).

It belongs to the complex I NdhO subunit family. As to quaternary structure, NDH-1 can be composed of about 15 different subunits; different subcomplexes with different compositions have been identified which probably have different functions.

It localises to the cellular thylakoid membrane. The catalysed reaction is a plastoquinone + NADH + (n+1) H(+)(in) = a plastoquinol + NAD(+) + n H(+)(out). It catalyses the reaction a plastoquinone + NADPH + (n+1) H(+)(in) = a plastoquinol + NADP(+) + n H(+)(out). Its function is as follows. NDH-1 shuttles electrons from an unknown electron donor, via FMN and iron-sulfur (Fe-S) centers, to quinones in the respiratory and/or the photosynthetic chain. The immediate electron acceptor for the enzyme in this species is believed to be plastoquinone. Couples the redox reaction to proton translocation, and thus conserves the redox energy in a proton gradient. Cyanobacterial NDH-1 also plays a role in inorganic carbon-concentration. This chain is NAD(P)H-quinone oxidoreductase subunit O, found in Synechococcus elongatus (strain ATCC 33912 / PCC 7942 / FACHB-805) (Anacystis nidulans R2).